A 90-amino-acid chain; its full sequence is UPF0335 protein R02793 (90 aa).

The protein belongs to the UPF0335 family.

In Rhizobium meliloti (strain 1021) (Ensifer meliloti), this protein is UPF0335 protein R02793.